The chain runs to 242 residues: Tryptophan synthase alpha chain (242 aa).

Residues E32 and D43 each act as proton acceptor in the active site.

This sequence belongs to the TrpA family. In terms of assembly, tetramer of two alpha and two beta chains.

The protein resides in the plastid. It localises to the chloroplast. It carries out the reaction (1S,2R)-1-C-(indol-3-yl)glycerol 3-phosphate + L-serine = D-glyceraldehyde 3-phosphate + L-tryptophan + H2O. It functions in the pathway amino-acid biosynthesis; L-tryptophan biosynthesis; L-tryptophan from chorismate: step 5/5. In terms of biological role, the alpha subunit is responsible for the aldol cleavage of indoleglycerol phosphate to indole and glyceraldehyde 3-phosphate. The polypeptide is Tryptophan synthase alpha chain (Cyanidium caldarium (Red alga)).